The primary structure comprises 239 residues: Ribosomal RNA small subunit methyltransferase G (239 aa).

S-adenosyl-L-methionine is bound by residues Gly-78, Phe-83, Ala-129–Glu-130, and Arg-148.

Belongs to the methyltransferase superfamily. RNA methyltransferase RsmG family.

Its subcellular location is the cytoplasm. Functionally, specifically methylates the N7 position of a guanine in 16S rRNA. This Clostridium beijerinckii (strain ATCC 51743 / NCIMB 8052) (Clostridium acetobutylicum) protein is Ribosomal RNA small subunit methyltransferase G.